Here is a 112-residue protein sequence, read N- to C-terminus: Putative transmembrane protein ORF112 (112 aa).

The next 3 helical transmembrane spans lie at 26–46, 50–70, and 80–100; these read FWEV…GILV, ILVT…MYLF, and IFFP…LVGV.

The protein localises to the host membrane. This chain is Putative transmembrane protein ORF112, found in Acidianus convivator (ABV).